The following is a 347-amino-acid chain: Heme A synthase (347 aa).

8 helical membrane passes run 14–34 (VKIW…IGGI), 96–116 (FHRL…LYFM), 129–149 (FILI…MVKS), 162–182 (LAMH…HFLL), 199–219 (VFYI…LVAG), 260–280 (FIHE…LLVL), 287–307 (MYLL…TFIY), and 311–331 (IILA…SIYL). H262 lines the heme pocket. H317 is a binding site for heme.

Belongs to the COX15/CtaA family. Type 2 subfamily. As to quaternary structure, interacts with CtaB. Heme b is required as a cofactor.

The protein localises to the cell membrane. It catalyses the reaction Fe(II)-heme o + 2 A + H2O = Fe(II)-heme a + 2 AH2. The protein operates within porphyrin-containing compound metabolism; heme A biosynthesis; heme A from heme O: step 1/1. Its function is as follows. Catalyzes the conversion of heme O to heme A by two successive hydroxylations of the methyl group at C8. The first hydroxylation forms heme I, the second hydroxylation results in an unstable dihydroxymethyl group, which spontaneously dehydrates, resulting in the formyl group of heme A. This is Heme A synthase from Ehrlichia ruminantium (strain Welgevonden).